The primary structure comprises 641 residues: tRNA 5-methylaminomethyl-2-thiouridine biosynthesis bifunctional protein MnmC (641 aa).

The tract at residues 1–219 (MTVSKILKQI…PYPICSAAVT (219 aa)) is tRNA (mnm(5)s(2)U34)-methyltransferase. Residues 232–641 (IGGGVASACL…GKALEVGVEV (410 aa)) form an FAD-dependent cmnm(5)s(2)U34 oxidoreductase region.

The protein in the N-terminal section; belongs to the methyltransferase superfamily. tRNA (mnm(5)s(2)U34)-methyltransferase family. This sequence in the C-terminal section; belongs to the DAO family. Requires FAD as cofactor.

The protein localises to the cytoplasm. It catalyses the reaction 5-aminomethyl-2-thiouridine(34) in tRNA + S-adenosyl-L-methionine = 5-methylaminomethyl-2-thiouridine(34) in tRNA + S-adenosyl-L-homocysteine + H(+). In terms of biological role, catalyzes the last two steps in the biosynthesis of 5-methylaminomethyl-2-thiouridine (mnm(5)s(2)U) at the wobble position (U34) in tRNA. Catalyzes the FAD-dependent demodification of cmnm(5)s(2)U34 to nm(5)s(2)U34, followed by the transfer of a methyl group from S-adenosyl-L-methionine to nm(5)s(2)U34, to form mnm(5)s(2)U34. This is tRNA 5-methylaminomethyl-2-thiouridine biosynthesis bifunctional protein MnmC from Shewanella pealeana (strain ATCC 700345 / ANG-SQ1).